The sequence spans 689 residues: Glycine--tRNA ligase beta subunit (689 aa).

It belongs to the class-II aminoacyl-tRNA synthetase family. As to quaternary structure, tetramer of two alpha and two beta subunits.

It localises to the cytoplasm. It catalyses the reaction tRNA(Gly) + glycine + ATP = glycyl-tRNA(Gly) + AMP + diphosphate. This chain is Glycine--tRNA ligase beta subunit, found in Lacticaseibacillus paracasei (strain ATCC 334 / BCRC 17002 / CCUG 31169 / CIP 107868 / KCTC 3260 / NRRL B-441) (Lactobacillus paracasei).